Consider the following 210-residue polypeptide: Ribosomal RNA large subunit methyltransferase E (210 aa).

Gly-60, Trp-62, Asp-80, Asp-96, and Asp-122 together coordinate S-adenosyl-L-methionine. The active-site Proton acceptor is Lys-162.

It belongs to the class I-like SAM-binding methyltransferase superfamily. RNA methyltransferase RlmE family.

The protein localises to the cytoplasm. The enzyme catalyses uridine(2552) in 23S rRNA + S-adenosyl-L-methionine = 2'-O-methyluridine(2552) in 23S rRNA + S-adenosyl-L-homocysteine + H(+). Its function is as follows. Specifically methylates the uridine in position 2552 of 23S rRNA at the 2'-O position of the ribose in the fully assembled 50S ribosomal subunit. The polypeptide is Ribosomal RNA large subunit methyltransferase E (Dichelobacter nodosus (strain VCS1703A)).